Here is a 67-residue protein sequence, read N- to C-terminus: Large ribosomal subunit protein bL31 (67 aa).

It belongs to the bacterial ribosomal protein bL31 family. Type A subfamily. As to quaternary structure, part of the 50S ribosomal subunit.

Its function is as follows. Binds the 23S rRNA. This chain is Large ribosomal subunit protein bL31, found in Finegoldia magna (strain ATCC 29328 / DSM 20472 / WAL 2508) (Peptostreptococcus magnus).